Here is a 638-residue protein sequence, read N- to C-terminus: ABC transporter G family member 12 (638 aa).

A disordered region spans residues 42–61; the sequence is KQEKAKKKNDTESSTGDMNT. The 244-residue stretch at 58–301 folds into the ABC transporter domain; the sequence is DMNTGVSTTI…SLGYPCPNNT (244 aa). 91–98 is an ATP binding site; the sequence is GPSGSGKS. An ABC transmembrane type-2 domain is found at 374-633; that stretch reads GNFVARVGTA…WTSYLALHFL (260 aa). 7 helical membrane-spanning segments follow: residues 376-396, 410-430, 459-479, 484-504, 516-536, 544-564, and 612-632; these read FVAR…CFAG, TIFF…SLFL, TLIV…FAHL, GHFF…DFMI, MTFA…GFYV, SFGW…LVVN, and FGVV…ALHF.

This sequence belongs to the ABC transporter superfamily. ABCG family. Eye pigment precursor importer (TC 3.A.1.204) subfamily.

Its subcellular location is the membrane. The polypeptide is ABC transporter G family member 12 (abcG12) (Dictyostelium discoideum (Social amoeba)).